We begin with the raw amino-acid sequence, 161 residues long: Cyclic pyranopterin monophosphate synthase (161 aa).

Residues 75 to 77 and 113 to 114 each bind substrate; these read LCH and ME. Asp-128 is a catalytic residue.

This sequence belongs to the MoaC family. Homohexamer; trimer of dimers.

The enzyme catalyses (8S)-3',8-cyclo-7,8-dihydroguanosine 5'-triphosphate = cyclic pyranopterin phosphate + diphosphate. It functions in the pathway cofactor biosynthesis; molybdopterin biosynthesis. In terms of biological role, catalyzes the conversion of (8S)-3',8-cyclo-7,8-dihydroguanosine 5'-triphosphate to cyclic pyranopterin monophosphate (cPMP). In Cronobacter sakazakii (strain ATCC BAA-894) (Enterobacter sakazakii), this protein is Cyclic pyranopterin monophosphate synthase.